The chain runs to 166 residues: Putative peroxiredoxin (166 aa).

In terms of domain architecture, Thioredoxin spans 1 to 166 (EIGSTIPNAT…SSAATVLSKL (166 aa)). The active-site Cysteine sulfenic acid (-SOH) intermediate is the C56. A Microbody targeting signal motif is present at residues 164–166 (SKL).

The protein belongs to the peroxiredoxin family. Prx5 subfamily. Homodimer; disulfide-linked, upon oxidation.

The enzyme catalyses a hydroperoxide + [thioredoxin]-dithiol = an alcohol + [thioredoxin]-disulfide + H2O. Its function is as follows. Thiol-specific peroxidase that catalyzes the reduction of hydrogen peroxide and organic hydroperoxides to water and alcohols, respectively. Plays a role in cell protection against oxidative stress by detoxifying peroxides and as sensor of hydrogen peroxide-mediated signaling events. In Malassezia furfur (Pityriasis versicolor infection agent), this protein is Putative peroxiredoxin.